The chain runs to 194 residues: MARAYRLGEDLGTGAKCVKFLINLASTPSMAVVPTAVELCIQAAVDDPVGEARWQSWFDQWLLELQSAGAVELTLRLTDDAEIRRLNARFRGVDAPTDVLSFEFEADDTQALIAEEPLYLGDIVVSVPTATRQAREFGHTLEVELAWLAVHGLLHLLGWDHPDEQSWRAMVTQQARLLKGVNVVYDWPSVYPVG.

3 residues coordinate Zn(2+): His-151, His-155, and His-161.

Belongs to the endoribonuclease YbeY family. Zn(2+) is required as a cofactor.

Its subcellular location is the cytoplasm. In terms of biological role, single strand-specific metallo-endoribonuclease involved in late-stage 70S ribosome quality control and in maturation of the 3' terminus of the 16S rRNA. This Gloeobacter violaceus (strain ATCC 29082 / PCC 7421) protein is Endoribonuclease YbeY.